The following is a 246-amino-acid chain: Phosphate import ATP-binding protein PstB (246 aa).

The region spanning 3–241 (AKTTNLNLFY…PKQEKTKAYL (239 aa)) is the ABC transporter domain. 35-42 (GASGCGKS) is an ATP binding site.

The protein belongs to the ABC transporter superfamily. Phosphate importer (TC 3.A.1.7) family. The complex is composed of two ATP-binding proteins (PstB), two transmembrane proteins (PstC and PstA) and a solute-binding protein (PstS).

Its subcellular location is the cell inner membrane. The enzyme catalyses phosphate(out) + ATP + H2O = ADP + 2 phosphate(in) + H(+). Its function is as follows. Part of the ABC transporter complex PstSACB involved in phosphate import. Responsible for energy coupling to the transport system. The polypeptide is Phosphate import ATP-binding protein PstB (Campylobacter jejuni subsp. jejuni serotype O:2 (strain ATCC 700819 / NCTC 11168)).